The sequence spans 353 residues: Protein RecA (353 aa).

Residue 67-74 participates in ATP binding; the sequence is GPESSGKT.

Belongs to the RecA family.

The protein resides in the cytoplasm. Can catalyze the hydrolysis of ATP in the presence of single-stranded DNA, the ATP-dependent uptake of single-stranded DNA by duplex DNA, and the ATP-dependent hybridization of homologous single-stranded DNAs. It interacts with LexA causing its activation and leading to its autocatalytic cleavage. The polypeptide is Protein RecA (Salmonella agona (strain SL483)).